Consider the following 529-residue polypeptide: Bifunctional purine biosynthesis protein PurH (529 aa).

Residues 2-149 (TNLVPVGRAL…KNHRFVNVVT (148 aa)) enclose the MGS-like domain.

The protein belongs to the PurH family.

The catalysed reaction is (6R)-10-formyltetrahydrofolate + 5-amino-1-(5-phospho-beta-D-ribosyl)imidazole-4-carboxamide = 5-formamido-1-(5-phospho-D-ribosyl)imidazole-4-carboxamide + (6S)-5,6,7,8-tetrahydrofolate. It carries out the reaction IMP + H2O = 5-formamido-1-(5-phospho-D-ribosyl)imidazole-4-carboxamide. It participates in purine metabolism; IMP biosynthesis via de novo pathway; 5-formamido-1-(5-phospho-D-ribosyl)imidazole-4-carboxamide from 5-amino-1-(5-phospho-D-ribosyl)imidazole-4-carboxamide (10-formyl THF route): step 1/1. It functions in the pathway purine metabolism; IMP biosynthesis via de novo pathway; IMP from 5-formamido-1-(5-phospho-D-ribosyl)imidazole-4-carboxamide: step 1/1. In Cereibacter sphaeroides (strain ATCC 17025 / ATH 2.4.3) (Rhodobacter sphaeroides), this protein is Bifunctional purine biosynthesis protein PurH.